Reading from the N-terminus, the 257-residue chain is GTP cyclohydrolase FolE2 (257 aa).

Belongs to the GTP cyclohydrolase IV family.

It catalyses the reaction GTP + H2O = 7,8-dihydroneopterin 3'-triphosphate + formate + H(+). It functions in the pathway cofactor biosynthesis; 7,8-dihydroneopterin triphosphate biosynthesis; 7,8-dihydroneopterin triphosphate from GTP: step 1/1. Converts GTP to 7,8-dihydroneopterin triphosphate. This chain is GTP cyclohydrolase FolE2, found in Dictyoglomus thermophilum (strain ATCC 35947 / DSM 3960 / H-6-12).